The sequence spans 396 residues: Maltose/maltodextrin-binding periplasmic protein (396 aa).

A signal peptide spans M1–A26.

Belongs to the bacterial solute-binding protein 1 family. In terms of assembly, the complex is composed of two ATP-binding proteins (MalK), two transmembrane proteins (MalG and MalF) and a solute-binding protein (MalE).

It is found in the periplasm. Its function is as follows. Part of the ABC transporter complex MalEFGK involved in maltose/maltodextrin import. Binds maltose and higher maltodextrins. The sequence is that of Maltose/maltodextrin-binding periplasmic protein (malE) from Salmonella typhimurium (strain LT2 / SGSC1412 / ATCC 700720).